Here is a 181-residue protein sequence, read N- to C-terminus: MSQSLKTYYKEKVVPLLMETFEYKNIHEVPKITKITINRGLGEASKNNKALESSVQELAIISGQQPVITKAKKSVAGFKIRDGMPVGIAVTLRSKMMYAFLERLIHLSLPRIRDFKGISVQLFDGRGNYNLGLKEQLIFPEIEYDRIDQIRGMDIAITTTAKTQQEGIALLKALGMPFNDN.

It belongs to the universal ribosomal protein uL5 family. As to quaternary structure, part of the 50S ribosomal subunit; contacts the 5S rRNA.

The protein resides in the plastid. Its subcellular location is the chloroplast. Its function is as follows. Binds 5S rRNA, forms part of the central protuberance of the 50S subunit. This is Large ribosomal subunit protein uL5c (rpl5) from Rhodomonas salina (Cryptomonas salina).